A 426-amino-acid polypeptide reads, in one-letter code: Glutamyl-tRNA reductase (426 aa).

Substrate contacts are provided by residues 49 to 52, S101, 106 to 108, and Q112; these read TCNR and EPQ. C50 (nucleophile) is an active-site residue. 181-186 provides a ligand contact to NADP(+); the sequence is GAGETI. Residues 405-426 are disordered; that stretch reads RLFPEKPGYQHPPHSYPDREDR.

It belongs to the glutamyl-tRNA reductase family. As to quaternary structure, homodimer.

The catalysed reaction is (S)-4-amino-5-oxopentanoate + tRNA(Glu) + NADP(+) = L-glutamyl-tRNA(Glu) + NADPH + H(+). The protein operates within porphyrin-containing compound metabolism; protoporphyrin-IX biosynthesis; 5-aminolevulinate from L-glutamyl-tRNA(Glu): step 1/2. Catalyzes the NADPH-dependent reduction of glutamyl-tRNA(Glu) to glutamate 1-semialdehyde (GSA). In Xanthomonas axonopodis pv. citri (strain 306), this protein is Glutamyl-tRNA reductase.